Reading from the N-terminus, the 379-residue chain is Cytochrome b (379 aa).

4 helical membrane passes run 34–54 (FGSL…LLAT), 78–99 (WLIR…YLHI), 114–134 (WNIG…GYVL), and 179–199 (FFAL…IHLT). Residues histidine 84 and histidine 98 each coordinate heme b. Positions 183 and 197 each coordinate heme b. Histidine 202 contributes to the a ubiquinone binding site. 4 helical membrane passes run 227–247 (TKDM…AFFF), 289–309 (LGGV…PLLH), 321–341 (MSQL…WIGS), and 348–368 (FIII…FLFP).

The protein belongs to the cytochrome b family. In terms of assembly, the cytochrome bc1 complex contains 11 subunits: 3 respiratory subunits (MT-CYB, CYC1 and UQCRFS1), 2 core proteins (UQCRC1 and UQCRC2) and 6 low-molecular weight proteins (UQCRH/QCR6, UQCRB/QCR7, UQCRQ/QCR8, UQCR10/QCR9, UQCR11/QCR10 and a cleavage product of UQCRFS1). This cytochrome bc1 complex then forms a dimer. Requires heme b as cofactor.

Its subcellular location is the mitochondrion inner membrane. In terms of biological role, component of the ubiquinol-cytochrome c reductase complex (complex III or cytochrome b-c1 complex) that is part of the mitochondrial respiratory chain. The b-c1 complex mediates electron transfer from ubiquinol to cytochrome c. Contributes to the generation of a proton gradient across the mitochondrial membrane that is then used for ATP synthesis. The polypeptide is Cytochrome b (MT-CYB) (Tinamus major (Great tinamou)).